A 115-amino-acid polypeptide reads, in one-letter code: U3-lycotoxin-Ls1k (115 aa).

The signal sequence occupies residues 1–20; it reads MKFELLFGVLLVTLFSYSSA. Residues 21 to 44 constitute a propeptide that is removed on maturation; that stretch reads EMLDDFDQADEDELLSLIEKEEAR. 4 disulfides stabilise this stretch: Cys48–Cys63, Cys55–Cys72, Cys62–Cys87, and Cys74–Cys85.

Belongs to the neurotoxin 19 (CSTX) family. 01 subfamily. In terms of tissue distribution, expressed by the venom gland.

It localises to the secreted. This Lycosa singoriensis (Wolf spider) protein is U3-lycotoxin-Ls1k.